A 246-amino-acid polypeptide reads, in one-letter code: Uridylate kinase (246 aa).

Lys20–Gly23 contributes to the ATP binding site. Residues Gly28–Gly33 are involved in allosteric activation by GTP. Gly62 is a UMP binding site. Gly63 and Arg67 together coordinate ATP. UMP contacts are provided by residues Asp82 and Thr143–Thr150. Positions 170, 176, and 179 each coordinate ATP.

The protein belongs to the UMP kinase family. Homohexamer.

It is found in the cytoplasm. It carries out the reaction UMP + ATP = UDP + ADP. Its pathway is pyrimidine metabolism; CTP biosynthesis via de novo pathway; UDP from UMP (UMPK route): step 1/1. Its activity is regulated as follows. Allosterically activated by GTP. Inhibited by UTP. In terms of biological role, catalyzes the reversible phosphorylation of UMP to UDP. The polypeptide is Uridylate kinase (Cereibacter sphaeroides (strain ATCC 17025 / ATH 2.4.3) (Rhodobacter sphaeroides)).